Consider the following 859-residue polypeptide: Leucine--tRNA ligase (859 aa).

The 'HIGH' region motif lies at 42-52 (PYPSGRLHMGH). Positions 618-622 (KMSKS) match the 'KMSKS' region motif. K621 serves as a coordination point for ATP.

It belongs to the class-I aminoacyl-tRNA synthetase family.

The protein resides in the cytoplasm. The catalysed reaction is tRNA(Leu) + L-leucine + ATP = L-leucyl-tRNA(Leu) + AMP + diphosphate. In Shewanella woodyi (strain ATCC 51908 / MS32), this protein is Leucine--tRNA ligase.